A 324-amino-acid polypeptide reads, in one-letter code: Glyoxylate/hydroxypyruvate reductase B (324 aa).

Catalysis depends on residues Arg-237 and Glu-266. The active-site Proton donor is the His-285.

This sequence belongs to the D-isomer specific 2-hydroxyacid dehydrogenase family. GhrB subfamily. Homodimer.

The protein localises to the cytoplasm. The enzyme catalyses glycolate + NADP(+) = glyoxylate + NADPH + H(+). It carries out the reaction (R)-glycerate + NAD(+) = 3-hydroxypyruvate + NADH + H(+). It catalyses the reaction (R)-glycerate + NADP(+) = 3-hydroxypyruvate + NADPH + H(+). Functionally, catalyzes the NADPH-dependent reduction of glyoxylate and hydroxypyruvate into glycolate and glycerate, respectively. The polypeptide is Glyoxylate/hydroxypyruvate reductase B (Shigella flexneri serotype 5b (strain 8401)).